The chain runs to 260 residues: MNSAAGFSHLDRRERVLKLGESFEKQPRCAFHTVRYDFKPASIDTSSEGYLEVGEGEQVTITLPNIEGSTPPVTVFKGSKKPYLKECILIINHDTGECRLEKLSSNITVKKTRVEGSSKIQYRKEQQQQQMWNSARTPNLVKHSPSEDKMSPASPIDDIERELKAEASLMDQMSSCDSSSDSKSSSSSSSEDSSSDSEDEDCKSSTSDTGNCVSGHPTMTQYRIPDIDASHNRFRDNSGLLMNTLRNDLQLSESGSDSDD.

Residues 17–104 are necessary for interaction with ELL; that stretch reads LKLGESFEKQ…TGECRLEKLS (88 aa). Basic and acidic residues predominate over residues 116–126; the sequence is GSSKIQYRKEQ. 2 disordered regions span residues 116-154 and 170-234; these read GSSK…SPAS and MDQM…HNRF. Residues Ser-146, Ser-151, and Ser-154 each carry the phosphoserine modification. Residues 174–192 show a composition bias toward low complexity; sequence SSCDSSSDSKSSSSSSSED. Residues 177–260 form a necessary for transactivation activity region; that stretch reads DSSSDSKSSS…LSESGSDSDD (84 aa). Basic and acidic residues predominate over residues 225–234; it reads PDIDASHNRF. A necessary for interaction with TCEA1 and transactivation activity region spans residues 246-260; the sequence is RNDLQLSESGSDSDD.

This sequence belongs to the EAF family. Isoform 1 and isoform 2 interact with TCEA1. Component of the super elongation complex (SEC), at least composed of EAF1, EAF2, CDK9, MLLT3/AF9, AFF (AFF1 or AFF4), the P-TEFb complex and ELL (ELL, ELL2 or ELL3). Interacts with ELL and ELL2. As to expression, expressed in heart, brain, placenta, lung, skeletal muscle, kidney, pancreas, spleen, prostate, testis, small intestine, colon, adrenal, bone marrow, lymph node, spinal gland, stomach, thyroid, trachea, thymus, liver and leukocytes.

The protein localises to the nucleus speckle. In terms of biological role, acts as a transcriptional transactivator of TCEA1 elongation activity. Acts as a transcriptional transactivator of ELL and ELL2 elongation activities. Potent inducer of apoptosis in prostatic and non-prostatic cell lines. Inhibits prostate tumor growth in vivo. In Homo sapiens (Human), this protein is ELL-associated factor 2 (EAF2).